Here is a 293-residue protein sequence, read N- to C-terminus: Exosome complex component RRP4 (293 aa).

Residues 79-159 (EVGDIVVGRI…SDGAVSLHTR (81 aa)) form the S1 motif domain. Phosphoserine is present on Ser124.

This sequence belongs to the RRP4 family. Component of the RNA exosome core complex (Exo-9), composed of EXOSC1, EXOSC2, EXOSC3, EXOSC4, EXOSC5, EXOSC6, EXOSC7, EXOSC8 and EXOSC9; within the complex interacts with EXOSC4 and EXOSC7. The catalytically inactive RNA exosome core complex (Exo-9) associates with the catalytic subunit EXOSC10/RRP6. Exo-9 may associate with DIS3 to form the nucleolar exosome complex, or DIS3L to form the cytoplasmic exosome complex. Exo-9 is formed by a hexameric base ring consisting of the heterodimers EXOSC4-EXOSC9, EXOSC5-EXOSC8 and EXOSC6-EXOSC7, and a cap ring consisting of EXOSC1, EXOSC2 and EXOSC3. The RNA exosome complex associates with cofactors C1D/RRP47, MPHOSPH6/MPP6 and MTREX/MTR4. Interacts with GTPBP1. Interacts with ZFP36L1 (via N-terminus).

It localises to the cytoplasm. The protein resides in the nucleus. Its subcellular location is the nucleolus. Functionally, non-catalytic component of the RNA exosome complex which has 3'-&gt;5' exoribonuclease activity and participates in a multitude of cellular RNA processing and degradation events. In the nucleus, the RNA exosome complex is involved in proper maturation of stable RNA species such as rRNA, snRNA and snoRNA, in the elimination of RNA processing by-products and non-coding 'pervasive' transcripts, such as antisense RNA species and promoter-upstream transcripts (PROMPTs), and of mRNAs with processing defects, thereby limiting or excluding their export to the cytoplasm. The RNA exosome may be involved in Ig class switch recombination (CSR) and/or Ig variable region somatic hypermutation (SHM) by targeting AICDA deamination activity to transcribed dsDNA substrates. In the cytoplasm, the RNA exosome complex is involved in general mRNA turnover and specifically degrades inherently unstable mRNAs containing AU-rich elements (AREs) within their 3' untranslated regions, and in RNA surveillance pathways, preventing translation of aberrant mRNAs. It seems to be involved in degradation of histone mRNA. The catalytic inactive RNA exosome core complex of 9 subunits (Exo-9) is proposed to play a pivotal role in the binding and presentation of RNA for ribonucleolysis, and to serve as a scaffold for the association with catalytic subunits and accessory proteins or complexes. EXOSC2 as peripheral part of the Exo-9 complex stabilizes the hexameric ring of RNase PH-domain subunits through contacts with EXOSC4 and EXOSC7. The polypeptide is Exosome complex component RRP4 (EXOSC2) (Bos taurus (Bovine)).